We begin with the raw amino-acid sequence, 852 residues long: DNA polymerase kappa (852 aa).

One can recognise a UmuC domain in the interval 102–357 (IVHVDMDAFY…LPIRKVSGIG (256 aa)). The Mg(2+) site is built by D106 and D197. The tract at residues 252–273 (FEDSPPDLQPQGSPFQLNSEEQ) is disordered. Polar residues predominate over residues 261–273 (PQGSPFQLNSEEQ). 2 consecutive UBZ4-type zinc fingers follow at residues 619–649 (TFIC…DGPS) and 761–791 (ALVC…NKGI). The Zn(2+) site is built by C622, C625, H640, C644, C764, C767, H782, and C786. A disordered region spans residues 798-852 (SEGNSVKQPKESSRSTDRLQKASGRTKRPGTKTKSSTLKKTKPRDPRHTLDGFFK). Over residues 805–817 (QPKESSRSTDRLQ) the composition is skewed to basic and acidic residues. A compositionally biased stretch (basic residues) spans 821 to 839 (GRTKRPGTKTKSSTLKKTK). Over residues 840–852 (PRDPRHTLDGFFK) the composition is skewed to basic and acidic residues.

Belongs to the DNA polymerase type-Y family. In terms of assembly, interacts with PCNA. Interacts with REV1. The cofactor is Mg(2+). Requires Mn(2+) as cofactor. Detected at low levels in heart, brain, lung, liver, kidney and testis.

Its subcellular location is the nucleus. The catalysed reaction is DNA(n) + a 2'-deoxyribonucleoside 5'-triphosphate = DNA(n+1) + diphosphate. Its function is as follows. DNA polymerase specifically involved in DNA repair. Plays an important role in translesion synthesis, where the normal high-fidelity DNA polymerases cannot proceed and DNA synthesis stalls. Depending on the context, it inserts the correct base, but causes frequent base transitions, transversions and frameshifts. Lacks 3'-5' proofreading exonuclease activity. Forms a Schiff base with 5'-deoxyribose phosphate at abasic sites, but does not have lyase activity. In Mus musculus (Mouse), this protein is DNA polymerase kappa (Polk).